An 81-amino-acid chain; its full sequence is Delta-conotoxin-like Ac6.3 (81 aa).

The signal sequence occupies residues 1–22; sequence MKLTCVMIVAVLFLTAWTFVTA. Positions 23 to 51 are excised as a propeptide; it reads DDSRNGLENLSPKARHEMKNPEASKSNKR. 3 disulfide bridges follow: Cys54/Cys69, Cys61/Cys73, and Cys68/Cys78.

Belongs to the conotoxin O1 superfamily. As to expression, expressed by the venom duct.

It is found in the secreted. In terms of biological role, delta-conotoxins bind to site 6 of voltage-gated sodium channels (Nav) and inhibit the inactivation process. The protein is Delta-conotoxin-like Ac6.3 of Conus achatinus (Little frog cone).